The primary structure comprises 302 residues: Phytoene synthase (302 aa).

This sequence belongs to the phytoene/squalene synthase family. The cofactor is ATP. Mn(2+) serves as cofactor. Mg(2+) is required as a cofactor.

The protein operates within carotenoid biosynthesis; phytoene biosynthesis. Involved in the biosynthesis of carotenoids. Catalyzes the condensation of two molecules of geranylgeranyl diphosphate (GGPP) to give prephytoene diphosphate (PPPP) and the subsequent rearrangement of the cyclopropylcarbinyl intermediate to yield phytoene. The chain is Phytoene synthase (crtB) from Mycobacterium bovis (strain ATCC BAA-935 / AF2122/97).